Here is a 53-residue protein sequence, read N- to C-terminus: MPQMMPLPWIMVFLVSMALLWAIMTMVFFLYQPRSVSSAKGFSDRTVYLNWKW.

A helical membrane pass occupies residues 10–30; the sequence is IMVFLVSMALLWAIMTMVFFL.

It belongs to the ATPase protein 8 family. As to quaternary structure, F-type ATPases have 2 components, CF(1) - the catalytic core - and CF(0) - the membrane proton channel.

The protein localises to the mitochondrion membrane. Functionally, mitochondrial membrane ATP synthase (F(1)F(0) ATP synthase or Complex V) produces ATP from ADP in the presence of a proton gradient across the membrane which is generated by electron transport complexes of the respiratory chain. F-type ATPases consist of two structural domains, F(1) - containing the extramembraneous catalytic core and F(0) - containing the membrane proton channel, linked together by a central stalk and a peripheral stalk. During catalysis, ATP synthesis in the catalytic domain of F(1) is coupled via a rotary mechanism of the central stalk subunits to proton translocation. Part of the complex F(0) domain. Minor subunit located with subunit a in the membrane. The sequence is that of ATP synthase protein 8 (MT-ATP8) from Artemia franciscana (Brine shrimp).